We begin with the raw amino-acid sequence, 148 residues long: Macrodomain Ter protein (148 aa).

The protein belongs to the MatP family. In terms of assembly, homodimer.

It is found in the cytoplasm. In terms of biological role, required for spatial organization of the terminus region of the chromosome (Ter macrodomain) during the cell cycle. Prevents early segregation of duplicated Ter macrodomains during cell division. Binds specifically to matS, which is a 13 bp signature motif repeated within the Ter macrodomain. The chain is Macrodomain Ter protein from Photobacterium profundum (strain SS9).